The chain runs to 512 residues: NADH-quinone oxidoreductase subunit N 2 (512 aa).

14 helical membrane passes run 23-43 (AFVP…IDLF), 50-70 (TIIP…VYLQ), 88-108 (FAIF…LISI), 120-140 (SLGE…LMAS), 144-164 (LLMM…LVGY), 179-199 (VIYG…IYGL), 220-240 (ITLM…AGVV), 254-274 (PTPI…AMLI), 295-315 (WVTL…VVAL), 323-343 (LLAY…IVAD), 351-371 (LFYL…IILI), 394-414 (AASL…VGFI), 429-449 (VFVW…YFYF), and 477-497 (LVAF…PLSV).

It belongs to the complex I subunit 2 family. As to quaternary structure, NDH-1 is composed of 14 different subunits. Subunits NuoA, H, J, K, L, M, N constitute the membrane sector of the complex.

Its subcellular location is the cell inner membrane. The catalysed reaction is a quinone + NADH + 5 H(+)(in) = a quinol + NAD(+) + 4 H(+)(out). In terms of biological role, NDH-1 shuttles electrons from NADH, via FMN and iron-sulfur (Fe-S) centers, to quinones in the respiratory chain. The immediate electron acceptor for the enzyme in this species is believed to be a menaquinone. Couples the redox reaction to proton translocation (for every two electrons transferred, four hydrogen ions are translocated across the cytoplasmic membrane), and thus conserves the redox energy in a proton gradient. The chain is NADH-quinone oxidoreductase subunit N 2 from Chloroherpeton thalassium (strain ATCC 35110 / GB-78).